A 178-amino-acid chain; its full sequence is Cytochrome b6-f complex iron-sulfur subunit 3 (178 aa).

The helical transmembrane segment at 20-42 (FITGATVAVTAGAALYPAGKFLI) threads the bilayer. Residues 65–161 (PASQILAEPP…VAVIDNSILI (97 aa)) enclose the Rieske domain. Positions 107, 109, 125, and 128 each coordinate [2Fe-2S] cluster. Residues Cys-112 and Cys-127 are joined by a disulfide bond.

It belongs to the Rieske iron-sulfur protein family. As to quaternary structure, the 4 large subunits of the cytochrome b6-f complex are cytochrome b6, subunit IV (17 kDa polypeptide, PetD), cytochrome f and the Rieske protein, while the 4 small subunits are PetG, PetL, PetM and PetN. The complex functions as a dimer. Requires [2Fe-2S] cluster as cofactor.

It is found in the cellular thylakoid membrane. It catalyses the reaction 2 oxidized [plastocyanin] + a plastoquinol + 2 H(+)(in) = 2 reduced [plastocyanin] + a plastoquinone + 4 H(+)(out). Functionally, component of the cytochrome b6-f complex, which mediates electron transfer between photosystem II (PSII) and photosystem I (PSI), cyclic electron flow around PSI, and state transitions. The protein is Cytochrome b6-f complex iron-sulfur subunit 3 of Nostoc sp. (strain PCC 7120 / SAG 25.82 / UTEX 2576).